Reading from the N-terminus, the 85-residue chain is Large ribosomal subunit protein bL27 (85 aa).

Residues 1-20 (MAHKKAAGSTRNGRDSEAKR) form a disordered region.

Belongs to the bacterial ribosomal protein bL27 family.

In Colwellia psychrerythraea (strain 34H / ATCC BAA-681) (Vibrio psychroerythus), this protein is Large ribosomal subunit protein bL27.